The chain runs to 140 residues: Large ribosomal subunit protein uL16 (140 aa).

Basic residues predominate over residues 1-17 (MPLMPKRVKHRKMHRGS). A disordered region spans residues 1–21 (MPLMPKRVKHRKMHRGSRSGN).

The protein belongs to the universal ribosomal protein uL16 family. Part of the 50S ribosomal subunit.

Binds 23S rRNA and is also seen to make contacts with the A and possibly P site tRNAs. The protein is Large ribosomal subunit protein uL16 of Akkermansia muciniphila (strain ATCC BAA-835 / DSM 22959 / JCM 33894 / BCRC 81048 / CCUG 64013 / CIP 107961 / Muc).